Consider the following 182-residue polypeptide: Ribosome maturation factor RimM (182 aa).

One can recognise a PRC barrel domain in the interval valine 103–phenylalanine 182.

It belongs to the RimM family. Binds ribosomal protein uS19.

The protein localises to the cytoplasm. Its function is as follows. An accessory protein needed during the final step in the assembly of 30S ribosomal subunit, possibly for assembly of the head region. Essential for efficient processing of 16S rRNA. May be needed both before and after RbfA during the maturation of 16S rRNA. It has affinity for free ribosomal 30S subunits but not for 70S ribosomes. The polypeptide is Ribosome maturation factor RimM (Pectobacterium atrosepticum (strain SCRI 1043 / ATCC BAA-672) (Erwinia carotovora subsp. atroseptica)).